Here is a 248-residue protein sequence, read N- to C-terminus: MADWVTGKVTKVQNWTDALFSLTVHAPVLPFTAGQFTKLGLEIDGERVQRAYSYVNSPDNPDLEFYLVTVPDGKLSPRLAALKPGDEVQVVSEAAGFFVLDEVPHCETLWMLATGTAIGPYLSILQLGKDLDRFKNLVLVHAARYAADLSYLPLMQELEKRYEGKLRIQTVVSRETAAGSLTGRIPALIESGELESTIGLPMNKETSHVMLCGNPQMVRDTQQLLKETRQMTKHLRRRPGHMTAEHYW.

The 100-residue stretch at 2–101 folds into the FAD-binding FR-type domain; the sequence is ADWVTGKVTK…SEAAGFFVLD (100 aa). D17 lines the NADP(+) pocket. FAD-binding positions include 50–53, Y66, 74–76, and T116; these read RAYS and KLS. NADP(+) contacts are provided by residues 143 to 144, 173 to 174, R184, 214 to 216, and D220; these read AR, SR, and NPQ. 247 to 248 contacts FAD; that stretch reads YW.

It belongs to the ferredoxin--NADP reductase type 1 family. As to quaternary structure, monomer. The cofactor is FAD.

Its subcellular location is the cytoplasm. It catalyses the reaction 2 reduced [2Fe-2S]-[ferredoxin] + NADP(+) + H(+) = 2 oxidized [2Fe-2S]-[ferredoxin] + NADPH. The catalysed reaction is reduced [flavodoxin] + NADP(+) = oxidized [flavodoxin] + NADPH + 2 H(+). Transports electrons between flavodoxin or ferredoxin and NADPH. Reduces flavodoxin 1, flavodoxin 2 and ferredoxin, ferredoxin being the kinetically and thermodynamically preferred partner. Required for the activation of several enzymes such as pyruvate formate-lyase, anaerobic ribonucleotide reductase and cobalamin-dependent methionine synthase. This chain is Flavodoxin/ferredoxin--NADP reductase, found in Escherichia coli (strain K12).